The sequence spans 345 residues: Diacylglycerol O-acyltransferase 1 (345 aa).

Over 1-49 the chain is Cytoplasmic; that stretch reads MSEETSIPGIIASTPPISKDSRRNVSHWLQALAVFLHSVSLTLTASWYT. The chain crosses the membrane as a helical span at residues 50 to 70; that stretch reads VLWAFLPFWPFLIVYLIWLIY. Topologically, residues 71–113 are lumenal; sequence DDGFVTGKDRQKRWLRNAPPYRWFCHYFPIRLHKTTELDSEKN. A helical membrane pass occupies residues 114–134; that stretch reads YIFGYHPHGIISLGAFGGFAS. At 135–141 the chain is on the cytoplasmic side; it reads EGADFSK. Residues 142-162 form a helical membrane-spanning segment; that stretch reads LFPGINVSVLTLNSNFYVPVY. The Lumenal segment spans residues 163–216; the sequence is RDYLMALNINSVSKKSCVSILSRKPGDSVLIVIGGAQESLLSRPGQNNLVLKKR. The chain crosses the membrane as a helical span at residues 217–237; it reads FGFVKLAFLTGSSLVPCFAFG. Over 238–345 the chain is Cytoplasmic; the sequence is ESDIFEQVDN…NRISELKLSA (108 aa).

This sequence belongs to the diacylglycerol acyltransferase family.

The protein localises to the lipid droplet. The protein resides in the endoplasmic reticulum membrane. It carries out the reaction an acyl-CoA + a 1,2-diacyl-sn-glycerol = a triacyl-sn-glycerol + CoA. The catalysed reaction is a 2-acylglycerol + an acyl-CoA = a 1,2-diacyl-sn-glycerol + CoA. It participates in glycerolipid metabolism; triacylglycerol biosynthesis. In terms of biological role, catalyzes the terminal and only committed step in triacylglycerol (TAG) synthesis by using diacylglycerol (DAG) and fatty acyl-CoA as substrates. Required for storage lipid synthesis. Major DAG esterifying enzyme in stationary phase when TAG production is particularly active. Involved in lipid particle synthesis from the endoplasmic reticulum, promoting localized TAG production at discrete ER subdomains. The sequence is that of Diacylglycerol O-acyltransferase 1 (dga1) from Schizosaccharomyces pombe (strain 972 / ATCC 24843) (Fission yeast).